Here is a 496-residue protein sequence, read N- to C-terminus: RNA-binding motif protein, Y chromosome, family 1 member E (496 aa).

The 78-residue stretch at 8-85 (GKLFIGGLNR…KAIKVEQAKK (78 aa)) folds into the RRM domain. Disordered regions lie at residues 67–348 (DMNG…PHRD) and 453–496 (DQRN…SSRY). 2 stretches are compositionally biased toward low complexity: residues 97-114 (PASS…SARG) and 149-159 (PVKRGPSSRSG). Residues 175-184 (NSWMGSQGPM) are compositionally biased toward polar residues. Basic and acidic residues-rich tracts occupy residues 204–214 (RNDRMSTRHDG), 242–253 (DNGHSNRDEHSS), 276–289 (AYRD…DESY), 313–326 (GYRD…HESY), 335–348 (SSRE…PHRD), and 484–496 (GESR…SSRY).

Interacts with splicing factor proteins SFRS3/SRP20, TRA2B/SFRS10, KHDRBS1/SAM68 and KHDRBS3. In terms of tissue distribution, testis-specific.

Its subcellular location is the nucleus. RNA-binding protein which may be involved in spermatogenesis. Required for sperm development, possibly by participating in pre-mRNA splicing in the testis. This chain is RNA-binding motif protein, Y chromosome, family 1 member E (RBMY1E), found in Homo sapiens (Human).